We begin with the raw amino-acid sequence, 216 residues long: 3-isopropylmalate dehydratase small subunit (216 aa).

It belongs to the LeuD family. LeuD type 1 subfamily. As to quaternary structure, heterodimer of LeuC and LeuD.

It carries out the reaction (2R,3S)-3-isopropylmalate = (2S)-2-isopropylmalate. Its pathway is amino-acid biosynthesis; L-leucine biosynthesis; L-leucine from 3-methyl-2-oxobutanoate: step 2/4. Catalyzes the isomerization between 2-isopropylmalate and 3-isopropylmalate, via the formation of 2-isopropylmaleate. In Polaromonas sp. (strain JS666 / ATCC BAA-500), this protein is 3-isopropylmalate dehydratase small subunit.